The sequence spans 249 residues: Probable transcriptional regulatory protein ERGA_CDS_03720 (249 aa).

The segment at 1–21 (MAGHSQFANIKHRKGAQDAKR) is disordered.

Belongs to the TACO1 family.

Its subcellular location is the cytoplasm. The polypeptide is Probable transcriptional regulatory protein ERGA_CDS_03720 (Ehrlichia ruminantium (strain Gardel)).